Reading from the N-terminus, the 235-residue chain is Sugar fermentation stimulation protein homolog (235 aa).

It belongs to the SfsA family.

The polypeptide is Sugar fermentation stimulation protein homolog (Azotobacter vinelandii (strain DJ / ATCC BAA-1303)).